Consider the following 548-residue polypeptide: ATP synthase subunit alpha (548 aa).

172 to 179 lines the ATP pocket; it reads GDRKTGKT. Residues 511-548 form a disordered region; it reads FETTSGESVVPDENVEAMSEDDVEKESVKVRKPAPKKK. A compositionally biased stretch (acidic residues) spans 523–534; sequence ENVEAMSEDDVE.

The protein belongs to the ATPase alpha/beta chains family. In terms of assembly, F-type ATPases have 2 components, CF(1) - the catalytic core - and CF(0) - the membrane proton channel. CF(1) has five subunits: alpha(3), beta(3), gamma(1), delta(1), epsilon(1). CF(0) has three main subunits: a(1), b(2) and c(9-12). The alpha and beta chains form an alternating ring which encloses part of the gamma chain. CF(1) is attached to CF(0) by a central stalk formed by the gamma and epsilon chains, while a peripheral stalk is formed by the delta and b chains.

It localises to the cell membrane. It carries out the reaction ATP + H2O + 4 H(+)(in) = ADP + phosphate + 5 H(+)(out). In terms of biological role, produces ATP from ADP in the presence of a proton gradient across the membrane. The alpha chain is a regulatory subunit. The polypeptide is ATP synthase subunit alpha (Mycobacterium sp. (strain JLS)).